Reading from the N-terminus, the 1135-residue chain is Putative beta-hexosaminidase (1135 aa).

The first 23 residues, 1 to 23 (MKWVKSGVGILGILLTICHAVTS), serve as a signal peptide directing secretion. Disordered stretches follow at residues 970–1082 (AHPP…LPGQ) and 1107–1135 (QMRG…QQAG). Pro residues predominate over residues 986 to 1003 (NMPPPFPPRPPFGPPMLP). Low complexity-rich tracts occupy residues 1004–1026 (PGQM…TALG) and 1043–1073 (TGQA…LPGQ).

This sequence belongs to the glycosyl hydrolase 20 family. In terms of tissue distribution, prismatic layer of shell (at protein level). Expressed primarily in the mantle with highest level in the mantle edge and lower level in the mantle pallium.

It is found in the secreted. The catalysed reaction is Hydrolysis of terminal non-reducing N-acetyl-D-hexosamine residues in N-acetyl-beta-D-hexosaminides.. The protein operates within glycan degradation; chitin degradation. The protein is Putative beta-hexosaminidase of Margaritifera margaritifera (Freshwater pearl mussel).